We begin with the raw amino-acid sequence, 83 residues long: Small ribosomal subunit protein uS19m (83 aa).

The protein belongs to the universal ribosomal protein uS19 family.

Its subcellular location is the mitochondrion. This is Small ribosomal subunit protein uS19m (RPS19) from Tetraselmis subcordiformis (Marine green alga).